Here is a 73-residue protein sequence, read N- to C-terminus: Cell division protein ZapB (73 aa).

The stretch at 3-66 (LELLSQLETK…SWSDKVNGLV (64 aa)) forms a coiled coil.

Belongs to the ZapB family. Homodimer. The ends of the coiled-coil dimer bind to each other, forming polymers. Interacts with FtsZ.

The protein resides in the cytoplasm. Functionally, non-essential, abundant cell division factor that is required for proper Z-ring formation. It is recruited early to the divisome by direct interaction with FtsZ, stimulating Z-ring assembly and thereby promoting cell division earlier in the cell cycle. Its recruitment to the Z-ring requires functional FtsA or ZipA. In Shewanella frigidimarina (strain NCIMB 400), this protein is Cell division protein ZapB.